Reading from the N-terminus, the 622-residue chain is Chaperone protein HscA homolog (622 aa).

The protein belongs to the heat shock protein 70 family.

Chaperone involved in the maturation of iron-sulfur cluster-containing proteins. Has a low intrinsic ATPase activity which is markedly stimulated by HscB. This is Chaperone protein HscA homolog from Burkholderia pseudomallei (strain K96243).